The following is a 732-amino-acid chain: Small conductance calcium-activated potassium channel protein 3 (732 aa).

A compositionally biased stretch (basic and acidic residues) spans 1-11 (MDTSGHFHDSG). Disordered stretches follow at residues 1–82 (MDTS…QQAP) and 119–161 (AILH…QASP). The span at 35–61 (QPPPPPAPPAVPQQPPGPLLQPQPPQP) shows a compositional bias: pro residues. Over residues 62 to 82 (QQQQSQQQQQQQSQQQQQQAP) the composition is skewed to low complexity. Residues 119 to 133 (AILHPSSRQGSQLNL) show a composition bias toward polar residues. Residues 139–148 (GHSPSSTATS) show a composition bias toward low complexity. At Ser168 the chain carries Phosphoserine. Over residues 241–257 (THNHQHAGTTAGSTTFP) the composition is skewed to polar residues. A disordered region spans residues 241 to 260 (THNHQHAGTTAGSTTFPKAN). A helical transmembrane segment spans residues 289-309 (LIFGMFGIVVMVIETELSWGL). The chain crosses the membrane as a helical span at residues 316 to 336 (FSLALKCLISLSTVILLGLII). The chain crosses the membrane as a helical span at residues 367-387 (ISLEMLVCAIHPIPGEYKFFW). The helical transmembrane segment at 406-426 (IILSIPMFLRLYLIARVMLLH) threads the bilayer. The helical transmembrane segment at 455 to 475 (LMTICPGTVLLVFSISLWIIA) threads the bilayer. An intramembrane region (pore-forming) is located at residues 495–515 (FLGAMWLISITFLSIGYGDMV). Residues 524–544 (VCLLTGIMGAGCTALVVAVVA) form a helical membrane-spanning segment. The interval 562-638 (DTQLTKRIKN…LVDLSKMQNV (77 aa)) is calmodulin-binding. The stretch at 643–670 (ITELNDRSEDLEKQIGSLESKLEHLTAS) forms a coiled coil. Residues 704–732 (GTSHAPPSDSPIGISSTSFPTPYTSSSSC) are disordered. Positions 718-732 (SSTSFPTPYTSSSSC) are enriched in low complexity.

This sequence belongs to the potassium channel KCNN family. KCa2.3/KCNN3 subfamily. Homodimer. Heteromultimer with KCNN2 or KCNN1; this modulates plasma membrane expression and consequently the small conductance calcium-activated potassium channel activity. The complex is composed of 4 channel subunits each of which binds to a calmodulin subunit which regulates the channel activity through calcium-binding. Interacts with CALM1. Expressed at low levels in atrial and ventricular myocytes (at protein level).

The protein localises to the cell membrane. The protein resides in the cytoplasm. Its subcellular location is the myofibril. It localises to the sarcomere. It is found in the z line. It carries out the reaction K(+)(in) = K(+)(out). With respect to regulation, inhibited by bee venom neurotoxin apamin. In terms of biological role, small conductance calcium-activated potassium channel that mediates the voltage-independent transmembrane transfer of potassium across the cell membrane through a constitutive interaction with calmodulin which binds the intracellular calcium allowing its opening. The current is characterized by a voltage-independent activation, an intracellular calcium concentration increase-dependent activation and a single-channel conductance of 10 picosiemens. Also presents an inwardly rectifying current, thus reducing its already small outward conductance of potassium ions, which is particularly the case when the membrane potential displays positive values, above + 20 mV. Activation is followed by membrane hyperpolarization. Thought to regulate neuronal excitability by contributing to the slow component of synaptic afterhyperpolarization. In Mus musculus (Mouse), this protein is Small conductance calcium-activated potassium channel protein 3.